Consider the following 216-residue polypeptide: Gas vesicle protein H (216 aa).

A disordered region spans residues 1-141; it reads MSPNLNGPGG…IHIETRETDD (141 aa). The segment covering 15–25 has biased composition (acidic residues); it reads DRPDEPDDSDR. Composition is skewed to basic and acidic residues over residues 38–51, 73–84, and 107–141; these read PDDR…RPSD, DGHRQGHGRIDR, and KPSD…ETDD.

Belongs to the gas vesicle GvpH family. In terms of assembly, gvpF to GvpM interact with each other in vitro, and may form multi-subunit complex(es). Interacts with GvpC. Might interact with GvpA.

The protein resides in the gas vesicle. In terms of biological role, proteins GvpF to GvpM might be involved in nucleating gas vesicle formation. A minor component of the gas vesicle. Gas vesicles are hollow, gas filled proteinaceous nanostructures found in some microorganisms. They allow positioning of halobacteria at the optimal depth for growth in the poorly aerated, shallow brine pools of their habitat. Expression of a 9.5 kb mc-vac DNA fragment containing 2 divergently transcribed regions (gvpD-gvpE-gvpF-gvpG-gvpH-gvpI-gvpJ-gvpK-gvpL-gvpM and gvpA-gvpC-gvpN-gvpO) allows H.volcanii to produce gas vesicles. The chain is Gas vesicle protein H from Haloferax mediterranei (strain ATCC 33500 / DSM 1411 / JCM 8866 / NBRC 14739 / NCIMB 2177 / R-4) (Halobacterium mediterranei).